Consider the following 60-residue polypeptide: Metallothionein (60 aa).

The interval 1-28 (MDCACATGGSCSCAGSCKCENCKCTSCK) is beta. The a divalent metal cation site is built by cysteine 3, cysteine 5, cysteine 11, cysteine 13, cysteine 17, cysteine 19, cysteine 22, cysteine 24, cysteine 27, cysteine 31, cysteine 32, cysteine 34, cysteine 35, cysteine 39, cysteine 42, cysteine 46, cysteine 48, cysteine 56, cysteine 58, and cysteine 59. The segment at 29–60 (KSCCSCCPSECEKCGQGCVCKGGSSEKCSCCN) is alpha.

Belongs to the metallothionein superfamily. Type 1 family.

In terms of biological role, metallothioneins have a high content of cysteine residues that bind various heavy metals. The chain is Metallothionein (MT-A) from Ambystoma mexicanum (Axolotl).